The following is a 470-amino-acid chain: E3 SUMO-protein ligase EGR2 (470 aa).

The segment covering 126 to 141 (PPASTTASSSVTSASP) has biased composition (low complexity). Disordered stretches follow at residues 126–153 (PPASTTASSSVTSASPNPLATGPLGVCT), 159–178 (PELDHLYSPPPPPPPYSGCT), and 184–211 (DPSAFLSPPPTTSTSSLAYQPPPSYPSP). Lys247 carries the N6-acetyllysine; by EP300 modification. Residues 275 to 344 (GPSAGVTGPG…RPYPCPAEGC (70 aa)) are disordered. A compositionally biased stretch (gly residues) spans 281–291 (TGPGASGGGEG). 3 C2H2-type zinc fingers span residues 337 to 361 (YPCPAEGCDRRFSRSDELTRHIRIH), 367 to 389 (FQCRICMRNFSRSDHLTTHIRTH), and 395 to 417 (FACDYCGRKFARSDERKRHTKIH). Residues 408–470 (DERKRHTKIH…ASCTSRTRTP (63 aa)) form a disordered region. The span at 412 to 422 (RHTKIHLRQKE) shows a compositional bias: basic residues. Residues 426–439 (SAPSSSASAQSSAS) show a composition bias toward low complexity. The span at 440–450 (GPGGSQAGGSL) shows a compositional bias: gly residues.

Belongs to the EGR C2H2-type zinc-finger protein family. In terms of assembly, interacts with HCFC1. Interacts with WWP2. Interacts with UBC9. Interacts with CITED1. Interacts (via phosphorylated form) with SFN. Post-translationally, ubiquitinated by WWP2 leading to proteasomal degradation. In terms of processing, acetylated at Lys-247. May be deacetylated by HDAC6, HDAC10 or SIRT1.

It localises to the nucleus. The protein operates within protein modification; protein sumoylation. Functionally, sequence-specific DNA-binding transcription factor. Plays a role in hindbrain segmentation by regulating the expression of a subset of homeobox containing genes and in Schwann cell myelination by regulating the expression of genes involved in the formation and maintenance of myelin. Binds to two EGR2-consensus sites EGR2A (5'-CTGTAGGAG-3') and EGR2B (5'-ATGTAGGTG-3') in the HOXB3 enhancer and promotes HOXB3 transcriptional activation. Binds to specific DNA sites located in the promoter region of HOXA4, HOXB2 and ERBB2. Regulates hindbrain segmentation by controlling the expression of Hox genes, such as HOXA4, HOXB3 and HOXB2, and thereby specifying odd and even rhombomeres. Promotes the expression of HOXB3 in the rhombomere r5 in the hindbrain. Regulates myelination in the peripheral nervous system after birth, possibly by regulating the expression of myelin proteins, such as MPZ, and by promoting the differentiation of Schwann cells. Involved in the development of the jaw openener musculature, probably by playing a role in its innervation through trigeminal motor neurons. May play a role in adipogenesis, possibly by regulating the expression of CEBPB. E3 SUMO-protein ligase helping SUMO1 conjugation to its coregulators NAB1 and NAB2, whose sumoylation down-regulates EGR2 transcriptional activity. The protein is E3 SUMO-protein ligase EGR2 (Egr2) of Rattus norvegicus (Rat).